We begin with the raw amino-acid sequence, 293 residues long: tRNA pseudouridine synthase B (293 aa).

Catalysis depends on aspartate 39, which acts as the Nucleophile.

This sequence belongs to the pseudouridine synthase TruB family. Type 1 subfamily.

It catalyses the reaction uridine(55) in tRNA = pseudouridine(55) in tRNA. Responsible for synthesis of pseudouridine from uracil-55 in the psi GC loop of transfer RNAs. The polypeptide is tRNA pseudouridine synthase B (Thermobifida fusca (strain YX)).